The primary structure comprises 176 residues: NAD(P)H-quinone oxidoreductase subunit J (176 aa).

A disordered region spans residues 1–32 (MEKEGLAKSSDTSIKKEGFISQSLSKDGIPNQ). The span at 20 to 32 (ISQSLSKDGIPNQ) shows a compositional bias: polar residues.

Belongs to the complex I 30 kDa subunit family. In terms of assembly, NDH-1 can be composed of about 15 different subunits; different subcomplexes with different compositions have been identified which probably have different functions.

It localises to the cellular thylakoid membrane. The enzyme catalyses a plastoquinone + NADH + (n+1) H(+)(in) = a plastoquinol + NAD(+) + n H(+)(out). It carries out the reaction a plastoquinone + NADPH + (n+1) H(+)(in) = a plastoquinol + NADP(+) + n H(+)(out). In terms of biological role, NDH-1 shuttles electrons from an unknown electron donor, via FMN and iron-sulfur (Fe-S) centers, to quinones in the respiratory and/or the photosynthetic chain. The immediate electron acceptor for the enzyme in this species is believed to be plastoquinone. Couples the redox reaction to proton translocation, and thus conserves the redox energy in a proton gradient. Cyanobacterial NDH-1 also plays a role in inorganic carbon-concentration. This Prochlorococcus marinus (strain MIT 9215) protein is NAD(P)H-quinone oxidoreductase subunit J.